We begin with the raw amino-acid sequence, 208 residues long: Small ribosomal subunit protein uS4 (208 aa).

Residues 98-163 form the S4 RNA-binding domain; sequence TRLDNVVFRL…TPLFKEIVDG (66 aa).

Belongs to the universal ribosomal protein uS4 family. Part of the 30S ribosomal subunit. Contacts protein S5. The interaction surface between S4 and S5 is involved in control of translational fidelity.

Functionally, one of the primary rRNA binding proteins, it binds directly to 16S rRNA where it nucleates assembly of the body of the 30S subunit. With S5 and S12 plays an important role in translational accuracy. This chain is Small ribosomal subunit protein uS4, found in Heliobacterium modesticaldum (strain ATCC 51547 / Ice1).